We begin with the raw amino-acid sequence, 425 residues long: UPF0597 protein VSAL_I0741 (425 aa).

Belongs to the UPF0597 family.

This is UPF0597 protein VSAL_I0741 from Aliivibrio salmonicida (strain LFI1238) (Vibrio salmonicida (strain LFI1238)).